The sequence spans 472 residues: Cysteine--tRNA ligase (472 aa).

Zn(2+) is bound at residue C28. A 'HIGH' region motif is present at residues 30–40 (PTVYDYTHIGH). Residues C207, H232, and E236 each contribute to the Zn(2+) site. Positions 264-268 (KMSKS) match the 'KMSKS' region motif. Residue K267 coordinates ATP.

It belongs to the class-I aminoacyl-tRNA synthetase family. It depends on Zn(2+) as a cofactor.

The protein localises to the cytoplasm. It carries out the reaction tRNA(Cys) + L-cysteine + ATP = L-cysteinyl-tRNA(Cys) + AMP + diphosphate. This chain is Cysteine--tRNA ligase (cysS), found in Aeropyrum pernix (strain ATCC 700893 / DSM 11879 / JCM 9820 / NBRC 100138 / K1).